The chain runs to 606 residues: Transmembrane 9 superfamily member 1 (606 aa).

The signal sequence occupies residues 1-27 (MTVLGYPRSWSCHCLPVLILLLGIGHG). The N-linked (GlcNAc...) asparagine glycan is linked to Asn178. 4 consecutive transmembrane segments (helical) span residues 237 to 257 (LSII…AVIL), 310 to 330 (VLGV…MALL), 339 to 359 (GAIN…SGYV), and 373 to 393 (VWNI…TWSV). A glycan (N-linked (GlcNAc...) asparagine) is linked at Asn401. 4 helical membrane passes run 412 to 432 (ILLL…IGGI), 469 to 489 (VGGF…FATV), 499 to 519 (GILF…SIAL), and 535 to 555 (SVLS…FYYA). N-linked (GlcNAc...) asparagine glycosylation occurs at Asn559. Residues 570-590 (FGYSLLTGYVFFLMLGTISFF) traverse the membrane as a helical segment.

This sequence belongs to the nonaspanin (TM9SF) (TC 9.A.2) family.

Its subcellular location is the lysosome membrane. The protein localises to the cytoplasmic vesicle. It localises to the autophagosome membrane. Functionally, plays an essential role in autophagy. The polypeptide is Transmembrane 9 superfamily member 1 (Tm9sf1) (Mus musculus (Mouse)).